The chain runs to 149 residues: Protein SprT-like (149 aa).

Positions 6 to 147 constitute a SprT-like domain; it reads LQKLTEDISL…CGKCRGKIKR (142 aa). His67 is a binding site for Zn(2+). Glu68 is an active-site residue. Residue His71 coordinates Zn(2+).

Belongs to the SprT family. Requires Zn(2+) as cofactor.

The protein resides in the cytoplasm. The sequence is that of Protein SprT-like from Bacillus velezensis (strain DSM 23117 / BGSC 10A6 / LMG 26770 / FZB42) (Bacillus amyloliquefaciens subsp. plantarum).